Here is a 202-residue protein sequence, read N- to C-terminus: MKPVKIGVAGPVGSGKTALIDRLAKAMRDRYNLAVITNDVYTYEDAEFLVRSGALPPERIAGVRTGGCPHTAIREDPAANQEAVEAMLARFLDLDILFLESGGDNLAASFSPELVDVWIYVIDVAAGDKIPRKGGPGIEKSHLLVINKIDLAPLVGADLGVMERDTRLKRGSRPWVFTNLKTGEGLDSVVEWIRREVLFEGD.

10-17 (GPVGSGKT) contributes to the GTP binding site.

Belongs to the SIMIBI class G3E GTPase family. UreG subfamily. Homodimer. UreD, UreF and UreG form a complex that acts as a GTP-hydrolysis-dependent molecular chaperone, activating the urease apoprotein by helping to assemble the nickel containing metallocenter of UreC. The UreE protein probably delivers the nickel.

It localises to the cytoplasm. Its function is as follows. Facilitates the functional incorporation of the urease nickel metallocenter. This process requires GTP hydrolysis, probably effectuated by UreG. In Synechococcus sp. (strain JA-3-3Ab) (Cyanobacteria bacterium Yellowstone A-Prime), this protein is Urease accessory protein UreG.